A 184-amino-acid chain; its full sequence is Cell wall protein phiA (184 aa).

The first 21 residues, 1-21 (MQLKNLIFAAATAAALPATDA), serve as a signal peptide directing secretion. A glycan (N-linked (GlcNAc...) asparagine) is linked at asparagine 58.

The protein belongs to the phiA family.

Its subcellular location is the secreted. It localises to the cell wall. Its function is as follows. Cell wall protein involved in development of asexual structures such as phialide and conidium development, and thus required for spore formation. Plays a role as a general stress protectant produced by the fungus in competition with antagonistic bacteria. This Aspergillus niger (strain ATCC MYA-4892 / CBS 513.88 / FGSC A1513) protein is Cell wall protein phiA.